The following is a 128-amino-acid chain: LFSFKELNEQFKRKIKVVLPVDLVLIIAASFACYCTNMENTYGLEVVGHIPRGIPPPRAPPMNILSAVITEAFGVALVGYAASLALAQGSAKKFKYSVDDNQEFLAHGLSNVISSFLFCIPSAAAMGR.

Over 1–14 (LFSFKELNEQFKRK) the chain is Extracellular. The chain crosses the membrane as a helical span at residues 15-35 (IKVVLPVDLVLIIAASFACYC). Topologically, residues 36 to 66 (TNMENTYGLEVVGHIPRGIPPPRAPPMNILS) are cytoplasmic. A helical membrane pass occupies residues 67–87 (AVITEAFGVALVGYAASLALA). Over 88-103 (QGSAKKFKYSVDDNQE) the chain is Extracellular. A helical transmembrane segment spans residues 104 to 124 (FLAHGLSNVISSFLFCIPSAA). Residues 125-128 (AMGR) are Cytoplasmic-facing.

Belongs to the SLC26A/SulP transporter (TC 2.A.53) family. In terms of tissue distribution, expressed in gastric epithelium, predominantly in the gastric parietal cells but also at lower levels in mucosal cells.

It localises to the basolateral cell membrane. Its subcellular location is the recycling endosome membrane. The protein localises to the apical cell membrane. It is found in the lateral cell membrane. It carries out the reaction chloride(in) = chloride(out). It catalyses the reaction iodide(out) = iodide(in). The catalysed reaction is bromide(in) = bromide(out). The enzyme catalyses oxalate(in) = oxalate(out). It carries out the reaction nitrate(in) = nitrate(out). It catalyses the reaction sulfate(in) = sulfate(out). The catalysed reaction is D-gluconate(in) = D-gluconate(out). The enzyme catalyses thiocyanate(in) = thiocyanate(out). It carries out the reaction hydrogencarbonate(in) = hydrogencarbonate(out). It catalyses the reaction hydrogencarbonate(in) + chloride(out) = hydrogencarbonate(out) + chloride(in). In terms of biological role, acts as an anion channel mediating the transport of chloride, bromide, iodide, nitrate, sulfate, gluconate, thiocyanate, oxalate and bicarbonate ions. Its permeability towards bicarbonate is weak and increases when pH is above 7. Mediates thiocyanate transport in retinal pigment epithelium cells. Mediates iodide transport in the thyroid gland, playing an important role in the synthesis of thyroid hormones and the maintenance of thyroid function. The sequence is that of Anion exchange transporter from Oryctolagus cuniculus (Rabbit).